The sequence spans 139 residues: Protein cornichon homolog 4 (139 aa).

The next 3 membrane-spanning stretches (helical) occupy residues 5-25 (VFVF…YFII), 57-77 (LVTV…NLPV), and 118-138 (LGFH…ALIN).

This sequence belongs to the cornichon family. In terms of assembly, interacts with Sec23/24 complex components SEC24B and SEC24D. Interacts with CCR5. Interacts with ADRB2 in the early secretory pathway.

It localises to the membrane. It is found in the endoplasmic reticulum. The protein localises to the endoplasmic reticulum-Golgi intermediate compartment. Functionally, involved in G protein-coupled receptors (GPCRs) trafficking from the endoplasmic reticulum to the cell surface; it promotes the exit of GPCRs from the early secretory pathway, likely through interaction with the COPII machinery. This Bos taurus (Bovine) protein is Protein cornichon homolog 4 (CNIH4).